The following is a 316-amino-acid chain: Meiotically up-regulated gene 154 protein (316 aa).

4 helical membrane passes run 41–61 (YSIP…IYIK), 88–108 (AFLS…FIFS), 159–179 (FLLN…WFYS), and 186–206 (LLTF…SLLL). The interval 291–316 (HDSGISRDSSSPFKRFPHLSDGSSRF) is disordered.

It is found in the endoplasmic reticulum membrane. Functionally, has a role in meiosis. The chain is Meiotically up-regulated gene 154 protein (mug154) from Schizosaccharomyces pombe (strain 972 / ATCC 24843) (Fission yeast).